The following is a 486-amino-acid chain: Heme A synthase COX15 (486 aa).

Residues 1–33 (MLFRNIEVGRQAAKLLTRTSSRLAWQSIGASRN) constitute a mitochondrion transit peptide. Topologically, residues 34–85 (ISTIRQQIRKTQLYNFKKTVSIRPFSLSSPVFKPHVASESNPIESRLKTSKN) are mitochondrial matrix. Residues 86–106 (VAYWLIGTSGLVFGIVVLGGL) traverse the membrane as a helical segment. Residues 107–170 (TRLTESGLSI…FIFFMEWIHR (64 aa)) are Mitochondrial intermembrane-facing. His169 contacts heme o. The chain crosses the membrane as a helical span at residues 171 to 191 (LWGRAIGAVFILPAVYFAVSK). The Mitochondrial matrix segment spans residues 192 to 200 (KTSGHVNKR). A helical transmembrane segment spans residues 201-221 (LFGLAGLLGLQGFVGWWMVKS). The Mitochondrial intermembrane segment spans residues 222–243 (GLDQEQLDARKSKPTVSQYRLT). A helical transmembrane segment spans residues 244-264 (THLGTAFFLYMGMLWTGLEIL). His245 is a heme o binding site. Residues 265–293 (RECKWIKNPVQAISLFKKLDNPAIGPMRK) are Mitochondrial matrix-facing. The helical transmembrane segment at 294-314 (ISLALLAVSFLTAMSGGMVAG) threads the bilayer. The Mitochondrial intermembrane portion of the chain corresponds to 315-364 (LDAGWVYNTWPKMGERWFPSSRELMDENFCRREDKKDLWWRNLLENPVTV). Residues 365–387 (QLVHRTCAYVAFTSVLAAHMYAI) form a helical membrane-spanning segment. His368 contributes to the heme b binding site. Residues 388 to 402 (KKKAVIPRNAMTSLH) are Mitochondrial matrix-facing. The helical transmembrane segment at 403–423 (VMMGVVTLQATLGILTILYLV) threads the bilayer. Position 424 (Pro424) is a topological domain, mitochondrial intermembrane. Residues 425–445 (ISLASIHQAGALALLTSSLVF) form a helical membrane-spanning segment. His431 contacts heme b. Residues 446–486 (ASQLRKPRAPMRNVIITLPHSSKVTSGKILSEASKLASKPL) lie on the Mitochondrial matrix side of the membrane.

Belongs to the COX15/CtaA family. Type 2 subfamily. Forms 200-350 kDa oligomeric complexes independent on heme binding. In addition to form homooligomeric complexes, a portion also associates with the mitochondrial respiratory supercomplexes. Interacts with CcO assembly factors PET117, SHY1, COA3 and COA1, CcO subunit COX13 and cytochrome b-c1 subunit COR1. Heme b serves as cofactor.

It localises to the mitochondrion inner membrane. It catalyses the reaction Fe(II)-heme o + 2 A + H2O = Fe(II)-heme a + 2 AH2. Its pathway is porphyrin-containing compound metabolism; heme A biosynthesis; heme A from heme O: step 1/1. Catalyzes the second reaction in the biosynthesis of heme A, a prosthetic group of mitochondrial cytochrome c oxidase (CcO). Heme A is synthesized from heme B by two sequential enzymatic reactions catalyzed by heme O synthase (HOS/COX10) and heme A synthase (HAS/COX15). HAS catalyzes the conversion of heme O to heme A by two successive hydroxylations of the methyl group at C8, in a reaction that involves matrix ferredoxin YAH1 and ferredoxin reductase ARH1. The first hydroxylation forms heme I, the second hydroxylation results in an unstable dihydroxymethyl group, which spontaneously dehydrates, resulting in the formyl group of heme A. May also play a secondary role in CcO assembly. Plays a role in the maturation of COX1, the heme A-containing structural CcO subunit, possibly by interacting with the COX1-containing sub-assembly complexes that form prior to heme A insertion. May also positively regulate the upstream enzymatic reaction, farnesylation of heme B by HOS/COX10. The sequence is that of Heme A synthase COX15 from Saccharomyces cerevisiae (strain ATCC 204508 / S288c) (Baker's yeast).